The chain runs to 407 residues: Transmembrane protein 184B (407 aa).

The disordered stretch occupies residues 1–25; the sequence is MTVRGDVLAPDPASPTTAAASPSVS. Low complexity predominate over residues 9–25; that stretch reads APDPASPTTAAASPSVS. 7 helical membrane passes run 40–60, 84–104, 121–141, 178–198, 214–234, 249–269, and 290–310; these read FLMT…ALLI, ILFI…FFTN, LVIY…SSIM, LQFC…QAFG, VTII…LFYF, FFMV…LAIL, and VAAG…ALAL. Positions 369–395 are disordered; that stretch reads TLEPGPTWRGGAHGLSRSHSLSGARDN. 3 positions are modified to phosphoserine: Ser388, Ser402, and Ser403.

Belongs to the TMEM184 family.

It is found in the membrane. Functionally, may activate the MAP kinase signaling pathway. This chain is Transmembrane protein 184B (TMEM184B), found in Homo sapiens (Human).